Reading from the N-terminus, the 314-residue chain is tRNA pseudouridine synthase B (314 aa).

His43 contacts substrate. Asp48 functions as the Nucleophile in the catalytic mechanism. Substrate-binding residues include Tyr76, Tyr179, and Leu200.

Belongs to the pseudouridine synthase TruB family. Type 1 subfamily.

It catalyses the reaction uridine(55) in tRNA = pseudouridine(55) in tRNA. Functionally, responsible for synthesis of pseudouridine from uracil-55 in the psi GC loop of transfer RNAs. The protein is tRNA pseudouridine synthase B of Enterobacter sp. (strain 638).